The following is a 177-amino-acid chain: Eggshell protein (177 aa).

An N-terminal signal peptide occupies residues 1 to 18; the sequence is MKQSLTLVFLVAIGYATA. Repeat copies occupy residues 25–41, 42–59, 60–75, 76–91, and 92–112. The 5 X approximate tandem repeats stretch occupies residues 25–112; sequence YSGGYGGGCY…GCSGGNCGGG (88 aa). A compositionally biased stretch (gly residues) spans 149–166; the sequence is GSGKGKGGGKGGKGGKGG. The disordered stretch occupies residues 149 to 177; that stretch reads GSGKGKGGGKGGKGGKGGTYKPSHYGGGY.

In Schistosoma mansoni (Blood fluke), this protein is Eggshell protein.